The following is a 499-amino-acid chain: MVLAELGGSISRALQQMSNATIIDEKVLNECLNEITRALLQADVQFKLVRDMTTNIKKIVNLDDLAAGHNKRRIIQQAVFNELCKILDPGKPSFTPKKGKPSIVMFVGLQGSGKTTTCTKYAYYHQKKGWKPALVCADTFRAGAFDQLKQNATKAKIPFYGSYTESDPVKIAVDGVETFKKENCDLIIVDTSGRHKQEAALFEEMRQVAEATKPDLVIFVMDSSIGQAAFDQAQAFKQSVAVGAVIVTKMDGHAKGGGALSAVAATKSPVIFIGTGEHMDEFEVFDVKPFVSRLLGMGDWSGFMDKIHEVVPMDQQPELLQKLSEGHFTLRIMYEQFQNILKMGPIGQVFSMLPGFSAELMPKGRENESQAKIKRYMTMMDSMTNEELDSSNPKLMTDSRIMRIARGSGRQVHEVMDMMEEYKRLAKIWSKMKGLKIPKKGEMSALSRNMNAQHMSKVLPPQMLKQIGGMGGLQNLMKQMGSAKDMMGGMGGMFGGGDK.

The G-domain stretch occupies residues methionine 1–leucine 295. GTP-binding positions include glycine 108–threonine 115, aspartate 190–arginine 194, and threonine 248–aspartate 251. Residues glycine 296–lysine 499 form an M-domain region.

The protein belongs to the GTP-binding SRP family. SRP54 subfamily. In terms of assembly, component of a signal recognition particle (SRP) complex that consists of a 7SL RNA molecule of 300 nucleotides and six protein subunits: SRP72, SRP68, SRP54, SRP19, SRP14 and SRP9.

It localises to the cytoplasm. The protein localises to the endoplasmic reticulum. It carries out the reaction GTP + H2O = GDP + phosphate + H(+). Functionally, component of the signal recognition particle (SRP) complex, a ribonucleoprotein complex that mediates the cotranslational targeting of secretory and membrane proteins to the endoplasmic reticulum (ER). As part of the SRP complex, associates with the SRP receptor (SR) component SRPRA to target secretory proteins to the endoplasmic reticulum membrane. Binds to the signal sequence of presecretory proteins when they emerge from the ribosomes. Displays basal GTPase activity, and stimulates reciprocal GTPase activation of the SR subunit SRPRA. Forms a guanosine 5'-triphosphate (GTP)-dependent complex with the SR subunit SRPRA. SR compaction and GTPase mediated rearrangement of SR drive SRP-mediated cotranslational protein translocation into the ER. Requires the presence of SRP9/SRP14 and/or SRP19 to stably interact with RNA. This Solanum lycopersicum (Tomato) protein is Signal recognition particle subunit SRP54 2.